The sequence spans 749 residues: Phosphate-regulating neutral endopeptidase PHEX (749 aa).

Residues 1–20 lie on the Cytoplasmic side of the membrane; the sequence is MEAETGSTMETGKGTNRGIR. The chain crosses the membrane as a helical; Signal-anchor for type II membrane protein span at residues 21–37; it reads IALALFIGGTLVLGTLL. Residues 38 to 749 are Extracellular-facing; sequence FLVSQGLLSF…NRGADSCRLW (712 aa). Positions 53-749 constitute a Peptidase M13 domain; sequence YCLKPECIEA…NRGADSCRLW (697 aa). Cysteines 54 and 59 form a disulfide. 7 N-linked (GlcNAc...) asparagine glycosylation sites follow: N71, N238, N263, N290, N301, N377, and N484. Disulfide bonds link C77–C733, C85–C693, C142–C406, and C617–C746. H580 contributes to the Zn(2+) binding site. The active site involves E581. 2 residues coordinate Zn(2+): H584 and E642. D646 serves as the catalytic Proton donor. Residue N736 is glycosylated (N-linked (GlcNAc...) asparagine).

Belongs to the peptidase M13 family. As to quaternary structure, interacts with MEPE; the interaction is zinc-dependent (via ASARM motif). Zn(2+) is required as a cofactor. N-glycosylated. As to expression, expressed in bone, specifically in the osteoid and in osteocytes. Expressed in teeth, specifically in odontoblasts and ameloblasts. Expressed moderately by macrophages in the liver and has minimal expression in brown adipose tissue. Also expressed in suprabasal layers of the skin.

Its subcellular location is the cell membrane. In terms of biological role, peptidase that cleaves SIBLING (small integrin-binding ligand, N-linked glycoprotein)-derived ASARM peptides, thus regulating their biological activity. Cleaves ASARM peptides between Ser and Glu or Asp residues. Regulates osteogenic cell differentiation and bone mineralization through the cleavage of the MEPE-derived ASARM peptide. Promotes dentin mineralization and renal phosphate reabsorption by cleaving DMP1- and MEPE-derived ASARM peptides. Inhibits the cleavage of MEPE by CTSB/cathepsin B thus preventing MEPE degradation. The polypeptide is Phosphate-regulating neutral endopeptidase PHEX (Phex) (Mus musculus (Mouse)).